The chain runs to 504 residues: One cut domain family member 2 (504 aa).

Disordered regions lie at residues 29–95 (LGTL…GTAA), 166–189 (KFHH…RLSG), 274–332 (EQHL…QLEE), and 485–504 (WQDD…CTKA). The segment covering 35–56 (PAGGGSGGGGGGGGGGGGGGPG) has biased composition (gly residues). Positions 168–186 (HHPHPHHHPHHHHHHHHQR) are enriched in basic residues. Residues 324 to 410 (VATSGQLEEI…QRMSALRLAA (87 aa)) constitute a DNA-binding region (CUT). The segment at residues 426–485 (QKKSRLVFTDLQRRTLFAIFKENKRPSKEMQITISQQLGLELTTVSNFFMNARRRSLEKW) is a DNA-binding region (homeobox). The span at 490-504 (STGGSSSTSSTCTKA) shows a compositional bias: low complexity.

Belongs to the CUT homeobox family.

It localises to the nucleus. Transcriptional activator. Activates the transcription of a number of liver genes such as HNF3B. This is One cut domain family member 2 (ONECUT2) from Homo sapiens (Human).